The sequence spans 357 residues: DNA polymerase IV 2 (357 aa).

The UmuC domain maps to isoleucine 4 to glycine 184. Mg(2+) is bound by residues aspartate 8 and aspartate 102. Residue glutamate 103 is part of the active site.

This sequence belongs to the DNA polymerase type-Y family. Monomer. Mg(2+) is required as a cofactor.

Its subcellular location is the cytoplasm. It carries out the reaction DNA(n) + a 2'-deoxyribonucleoside 5'-triphosphate = DNA(n+1) + diphosphate. In terms of biological role, poorly processive, error-prone DNA polymerase involved in untargeted mutagenesis. Copies undamaged DNA at stalled replication forks, which arise in vivo from mismatched or misaligned primer ends. These misaligned primers can be extended by PolIV. Exhibits no 3'-5' exonuclease (proofreading) activity. May be involved in translesional synthesis, in conjunction with the beta clamp from PolIII. The protein is DNA polymerase IV 2 (dinB2) of Agrobacterium fabrum (strain C58 / ATCC 33970) (Agrobacterium tumefaciens (strain C58)).